Here is a 196-residue protein sequence, read N- to C-terminus: Mpv17-like protein (196 aa).

The Cytoplasmic portion of the chain corresponds to 1–16 (MVSWWQALTRAAGRYP). Positions 16-55 (PWPANVLLYAGFFSGGDALQQVLRGGPADWQHTRHVATVA) are targeting to peroxisomes. The helical transmembrane segment at 17-34 (WPANVLLYAGFFSGGDAL) threads the bilayer. The Lumenal portion of the chain corresponds to 35-50 (QQVLRGGPADWQHTRH). The helical transmembrane segment at 51-67 (VATVAVAFHANLNYVWL) threads the bilayer. Topologically, residues 68–90 (NLLERALPGRAPRTILAKVLCDQ) are cytoplasmic. The helical transmembrane segment at 91–108 (ALGGPVYVSTFYAGMSIL) threads the bilayer. The Lumenal portion of the chain corresponds to 109–150 (QGKDDIFLDMRQKFWNTYKSGLMYWPFVQLINFSLIPIRWRT). A helical membrane pass occupies residues 151-167 (AYTGLCGFLWATFLCFS). Topologically, residues 168–196 (QQEGDGTFKSAFTFRRIKVTNEVEKPSEK) are cytoplasmic.

The protein belongs to the peroxisomal membrane protein PXMP2/4 family.

It is found in the peroxisome membrane. Its function is as follows. Participates in reactive oxygen species metabolism by up- or down-regulation of the genes of antioxidant enzymes. Protective against the mitochondrial apoptotic cascade. This Bos taurus (Bovine) protein is Mpv17-like protein (MPV17L).